The sequence spans 346 residues: Methylthioribose-1-phosphate isomerase (346 aa).

Residues 46–48, R89, and Q196 contribute to the substrate site; that span reads RGA. D237 serves as the catalytic Proton donor. 247–248 lines the substrate pocket; sequence NK.

The protein belongs to the eIF-2B alpha/beta/delta subunits family. MtnA subfamily.

The enzyme catalyses 5-(methylsulfanyl)-alpha-D-ribose 1-phosphate = 5-(methylsulfanyl)-D-ribulose 1-phosphate. It functions in the pathway amino-acid biosynthesis; L-methionine biosynthesis via salvage pathway; L-methionine from S-methyl-5-thio-alpha-D-ribose 1-phosphate: step 1/6. In terms of biological role, catalyzes the interconversion of methylthioribose-1-phosphate (MTR-1-P) into methylthioribulose-1-phosphate (MTRu-1-P). The protein is Methylthioribose-1-phosphate isomerase of Citrifermentans bemidjiense (strain ATCC BAA-1014 / DSM 16622 / JCM 12645 / Bem) (Geobacter bemidjiensis).